The primary structure comprises 156 residues: MSRRHKAEKREINPDPKFGDLVITKFMNAVMLHGKKSVAESIVYGALDAIEAKAKSEPVALFHQALDNVAPHIEVRSRRVGGATYQVPVDVRPERRQALAIRWLINAARGRNETTMVDRLSGELLDAANNRGSAVKKREDTHRMAEANRAFSHYRW.

Belongs to the universal ribosomal protein uS7 family. In terms of assembly, part of the 30S ribosomal subunit. Contacts proteins S9 and S11.

In terms of biological role, one of the primary rRNA binding proteins, it binds directly to 16S rRNA where it nucleates assembly of the head domain of the 30S subunit. Is located at the subunit interface close to the decoding center, probably blocks exit of the E-site tRNA. The chain is Small ribosomal subunit protein uS7 from Brucella abortus (strain S19).